The sequence spans 487 residues: Calcium-binding tyrosine phosphorylation-regulated protein (487 aa).

Residues 12-49 enclose the RIIa domain; it reads YGLKTLLEGISRAVLKTNPSDINQFAAAYFQELTMYRG. Basic and acidic residues-rich tracts occupy residues 78-91 and 101-117; these read KKLECLKEPEKTSV and KSTDTDEDNVTRTEYSD. 3 disordered regions span residues 78–163, 243–271, and 420–487; these read KKLE…AVSP, VDLGSQPKENEAEQSTASSVPLQDEQEPP, and IVSD…ATAE. A compositionally biased stretch (low complexity) spans 140-152; that stretch reads SSSKPATPKATTP. 2 stretches are compositionally biased toward polar residues: residues 420-436 and 455-464; these read IVSDNTGQEESGENSVP and SGTSVKSSSG. Residues 478 to 487 are compositionally biased toward acidic residues; sequence IEPEGEATAE.

As to quaternary structure, interacts with FSCB. Phosphorylated on tyrosine residues during in vitro capacitation. Dephosphorylation affects its ability to bind calcium.

The protein resides in the cytoplasm. Its subcellular location is the cytoskeleton. It is found in the cell projection. The protein localises to the cilium. It localises to the flagellum. Its function is as follows. May function as a regulator of both motility- and head-associated functions such as capacitation and the acrosome reaction. May bind calcium in vitro. This chain is Calcium-binding tyrosine phosphorylation-regulated protein (CABYR), found in Macaca fascicularis (Crab-eating macaque).